The following is a 37-amino-acid chain: Esculentin-2P (37 aa).

Cysteines 31 and 37 form a disulfide.

Expressed by the skin glands.

It localises to the secreted. In terms of biological role, antibacterial activity against Gram-negative bacterium E.coli. The protein is Esculentin-2P of Lithobates pipiens (Northern leopard frog).